Consider the following 600-residue polypeptide: Elongation factor 4 (600 aa).

Positions 5 to 187 constitute a tr-type G domain; sequence SRIRNFSIIA…AIVTRLPPPK (183 aa). Residues 17 to 22 and 134 to 137 each bind GTP; these read DHGKST and NKID.

Belongs to the TRAFAC class translation factor GTPase superfamily. Classic translation factor GTPase family. LepA subfamily.

The protein resides in the cell inner membrane. It catalyses the reaction GTP + H2O = GDP + phosphate + H(+). Functionally, required for accurate and efficient protein synthesis under certain stress conditions. May act as a fidelity factor of the translation reaction, by catalyzing a one-codon backward translocation of tRNAs on improperly translocated ribosomes. Back-translocation proceeds from a post-translocation (POST) complex to a pre-translocation (PRE) complex, thus giving elongation factor G a second chance to translocate the tRNAs correctly. Binds to ribosomes in a GTP-dependent manner. The polypeptide is Elongation factor 4 (Rhodospirillum centenum (strain ATCC 51521 / SW)).